The primary structure comprises 149 residues: Transcriptional repressor NrdR (149 aa).

A zinc finger spans residues 3 to 34 (CPFCCAVDTKVIDSRLVGEGSSVRRRRQCVVC). Residues 49-139 (PRVVKSNDVR…VYRSFEDIRE (91 aa)) form the ATP-cone domain.

It belongs to the NrdR family. Zn(2+) is required as a cofactor.

Its function is as follows. Negatively regulates transcription of bacterial ribonucleotide reductase nrd genes and operons by binding to NrdR-boxes. In Erwinia tasmaniensis (strain DSM 17950 / CFBP 7177 / CIP 109463 / NCPPB 4357 / Et1/99), this protein is Transcriptional repressor NrdR.